A 266-amino-acid chain; its full sequence is Killer cell lectin-like receptor 8 (266 aa).

The Cytoplasmic portion of the chain corresponds to 1 to 44 (MSEQEVTFPTMRFHKSSGLNSQVRLEGTQRSRKAGLRVCSVPWQ). The chain crosses the membrane as a helical; Signal-anchor for type II membrane protein span at residues 45-66 (LIVIALGILCSLRLVIVAVFVT). The Extracellular segment spans residues 67 to 266 (KFFQYSQHKQ…CGKKLDKFPD (200 aa)). Asparagine 87 and asparagine 104 each carry an N-linked (GlcNAc...) asparagine glycan. The C-type lectin domain occupies 143–261 (GVKYWFCYGT…PYYCICGKKL (119 aa)). Disulfide bonds link cysteine 149/cysteine 154, cysteine 167/cysteine 255, cysteine 171/cysteine 257, and cysteine 236/cysteine 249.

In terms of assembly, homodimer; disulfide-linked. Interacts with the adapter protein TYROBP/DAP12; the interaction leads to natural killer cell activation.

It localises to the cell membrane. In terms of biological role, receptor on natural killer (NK) cells for class I MHC. The protein is Killer cell lectin-like receptor 8 (Klra8) of Mus musculus (Mouse).